The chain runs to 373 residues: Outer membrane protein assembly factor BamC (373 aa).

Positions 1-16 (MLKQVTPLVLIAAVTA) are cleaved as a signal peptide. Cysteine 17 is lipidated: N-palmitoyl cysteine. Cysteine 17 carries the S-diacylglycerol cysteine lipid modification.

The protein belongs to the BamC family. As to quaternary structure, part of the Bam complex.

It is found in the cell outer membrane. Part of the outer membrane protein assembly complex, which is involved in assembly and insertion of beta-barrel proteins into the outer membrane. The protein is Outer membrane protein assembly factor BamC of Shewanella sediminis (strain HAW-EB3).